Here is an 81-residue protein sequence, read N- to C-terminus: ATP synthase subunit c (81 aa).

The next 2 helical transmembrane spans lie at 4–24 and 57–77; these read MIAQ…AIGA and VGLV…FVFA.

Belongs to the ATPase C chain family. In terms of assembly, F-type ATPases have 2 components, F(1) - the catalytic core - and F(0) - the membrane proton channel. F(1) has five subunits: alpha(3), beta(3), gamma(1), delta(1), epsilon(1). F(0) has three main subunits: a(1), b(2) and c(10-14). The alpha and beta chains form an alternating ring which encloses part of the gamma chain. F(1) is attached to F(0) by a central stalk formed by the gamma and epsilon chains, while a peripheral stalk is formed by the delta and b chains.

It localises to the cell membrane. F(1)F(0) ATP synthase produces ATP from ADP in the presence of a proton or sodium gradient. F-type ATPases consist of two structural domains, F(1) containing the extramembraneous catalytic core and F(0) containing the membrane proton channel, linked together by a central stalk and a peripheral stalk. During catalysis, ATP synthesis in the catalytic domain of F(1) is coupled via a rotary mechanism of the central stalk subunits to proton translocation. In terms of biological role, key component of the F(0) channel; it plays a direct role in translocation across the membrane. A homomeric c-ring of between 10-14 subunits forms the central stalk rotor element with the F(1) delta and epsilon subunits. The chain is ATP synthase subunit c from Mycobacterium leprae (strain TN).